The primary structure comprises 35 residues: Beta-theraphotoxin-Hlv1a (35 aa).

3 cysteine pairs are disulfide-bonded: Cys-2/Cys-17, Cys-9/Cys-24, and Cys-16/Cys-31.

The protein belongs to the neurotoxin 10 (Hwtx-1) family. 10 (haplotoxin-1) subfamily. As to expression, expressed by the venom gland.

Its subcellular location is the secreted. In terms of biological role, spider venom neurotoxin that blocks voltage-gated sodium channel Nav1.3/SCN3A in human (IC(50)=1 uM) and rat (IC(50)=1 uM). The protein is Beta-theraphotoxin-Hlv1a of Cyriopagopus lividus (Cobalt blue tarantula).